An 876-amino-acid chain; its full sequence is Alanine--tRNA ligase (876 aa).

Residues histidine 564, histidine 568, cysteine 666, and histidine 670 each coordinate Zn(2+).

It belongs to the class-II aminoacyl-tRNA synthetase family. Zn(2+) is required as a cofactor.

It is found in the cytoplasm. It carries out the reaction tRNA(Ala) + L-alanine + ATP = L-alanyl-tRNA(Ala) + AMP + diphosphate. Catalyzes the attachment of alanine to tRNA(Ala) in a two-step reaction: alanine is first activated by ATP to form Ala-AMP and then transferred to the acceptor end of tRNA(Ala). Also edits incorrectly charged Ser-tRNA(Ala) and Gly-tRNA(Ala) via its editing domain. This chain is Alanine--tRNA ligase, found in Colwellia psychrerythraea (strain 34H / ATCC BAA-681) (Vibrio psychroerythus).